The primary structure comprises 253 residues: Sulfate transporter CysZ (253 aa).

4 consecutive transmembrane segments (helical) span residues 31 to 51 (FVIL…WWLF), 75 to 95 (LLWP…FSTI), 151 to 171 (IVLL…PVLW), and 222 to 242 (IPLL…AMWV).

It belongs to the CysZ family.

Its subcellular location is the cell inner membrane. In terms of biological role, high affinity, high specificity proton-dependent sulfate transporter, which mediates sulfate uptake. Provides the sulfur source for the cysteine synthesis pathway. The polypeptide is Sulfate transporter CysZ (Escherichia coli O139:H28 (strain E24377A / ETEC)).